The primary structure comprises 261 residues: Ribonuclease PH (261 aa).

Residues arginine 87 and 125–127 (GTR) each bind phosphate.

This sequence belongs to the RNase PH family. As to quaternary structure, homohexameric ring arranged as a trimer of dimers.

The enzyme catalyses tRNA(n+1) + phosphate = tRNA(n) + a ribonucleoside 5'-diphosphate. In terms of biological role, phosphorolytic 3'-5' exoribonuclease that plays an important role in tRNA 3'-end maturation. Removes nucleotide residues following the 3'-CCA terminus of tRNAs; can also add nucleotides to the ends of RNA molecules by using nucleoside diphosphates as substrates, but this may not be physiologically important. Probably plays a role in initiation of 16S rRNA degradation (leading to ribosome degradation) during starvation. The polypeptide is Ribonuclease PH (Caldanaerobacter subterraneus subsp. tengcongensis (strain DSM 15242 / JCM 11007 / NBRC 100824 / MB4) (Thermoanaerobacter tengcongensis)).